The sequence spans 239 residues: Orotidine 5'-phosphate decarboxylase (239 aa).

Substrate-binding positions include Asp10, Lys32, 59 to 68, Thr122, Arg184, Gln193, Gly213, and Arg214; that span reads DLKLHDIPNT. The active-site Proton donor is the Lys61.

It belongs to the OMP decarboxylase family. Type 1 subfamily. As to quaternary structure, homodimer.

It catalyses the reaction orotidine 5'-phosphate + H(+) = UMP + CO2. The protein operates within pyrimidine metabolism; UMP biosynthesis via de novo pathway; UMP from orotate: step 2/2. Its function is as follows. Catalyzes the decarboxylation of orotidine 5'-monophosphate (OMP) to uridine 5'-monophosphate (UMP). This chain is Orotidine 5'-phosphate decarboxylase, found in Geobacillus thermodenitrificans (strain NG80-2).